The following is a 126-amino-acid chain: Fluoride-specific ion channel FluC (126 aa).

The next 4 membrane-spanning stretches (helical) occupy residues 5 to 25 (LHFL…WLLG), 35 to 55 (WGTL…LGLI), 68 to 88 (ALVT…AEVV), and 99 to 119 (AAGY…LGLA). 2 residues coordinate Na(+): G75 and T78.

It belongs to the fluoride channel Fluc/FEX (TC 1.A.43) family.

The protein resides in the cell inner membrane. The catalysed reaction is fluoride(in) = fluoride(out). With respect to regulation, na(+) is not transported, but it plays an essential structural role and its presence is essential for fluoride channel function. Fluoride-specific ion channel. Important for reducing fluoride concentration in the cell, thus reducing its toxicity. The sequence is that of Fluoride-specific ion channel FluC from Bordetella avium (strain 197N).